The following is a 108-amino-acid chain: ATP-dependent Clp protease adapter protein ClpS (108 aa).

The protein belongs to the ClpS family. As to quaternary structure, binds to the N-terminal domain of the chaperone ClpA.

Its function is as follows. Involved in the modulation of the specificity of the ClpAP-mediated ATP-dependent protein degradation. The sequence is that of ATP-dependent Clp protease adapter protein ClpS from Cupriavidus necator (strain ATCC 17699 / DSM 428 / KCTC 22496 / NCIMB 10442 / H16 / Stanier 337) (Ralstonia eutropha).